The chain runs to 344 residues: Membrane progestin receptor delta (344 aa).

Topologically, residues M1–N51 are cytoplasmic. A helical transmembrane segment spans residues I52–G72. Over P73–P83 the chain is Extracellular. A helical membrane pass occupies residues L84–F104. Residues S105 to H113 are Cytoplasmic-facing. A helical membrane pass occupies residues I114–Y134. Over A135–H147 the chain is Extracellular. A helical membrane pass occupies residues L148 to C168. The Cytoplasmic portion of the chain corresponds to Y169–E217. Residues A218–A238 form a helical membrane-spanning segment. Over S239–Q258 the chain is Extracellular. Residues L259–M279 form a helical membrane-spanning segment. The Cytoplasmic segment spans residues G280–A292. Residues L293 to I313 form a helical membrane-spanning segment. Residues A314–Q344 are Extracellular-facing.

Belongs to the ADIPOR family. In terms of assembly, homodimer. As to expression, brain specific. Highly expressed in the hypothalamus, also expressed in forebrain, amygdala, corpus callosum and spinal cord.

The protein localises to the cell membrane. In terms of biological role, plasma membrane progesterone (P4) receptor coupled to G proteins. Seems to act through a G(s) mediated pathway. Involved in neurosteroid inhibition of apoptosis. May be involved in regulating rapid P4 signaling in the nervous system. Also binds dehydroepiandrosterone (DHEA), pregnanolone, pregnenolone and allopregnanolone. This chain is Membrane progestin receptor delta, found in Homo sapiens (Human).